The sequence spans 244 residues: Zinc import ATP-binding protein ZnuC 2 (244 aa).

In terms of domain architecture, ABC transporter spans 3–218; sequence IGCASLTIQL…PEYLALFGID (216 aa). 35–42 is an ATP binding site; the sequence is GPNGSGKT.

The protein belongs to the ABC transporter superfamily. Zinc importer (TC 3.A.1.15.5) family. The complex is composed of two ATP-binding proteins (ZnuC), two transmembrane proteins (ZnuB) and a solute-binding protein (ZnuA).

It is found in the cell inner membrane. The catalysed reaction is Zn(2+)(out) + ATP(in) + H2O(in) = Zn(2+)(in) + ADP(in) + phosphate(in) + H(+)(in). Its function is as follows. Part of the ABC transporter complex ZnuABC involved in zinc import. Responsible for energy coupling to the transport system. The protein is Zinc import ATP-binding protein ZnuC 2 of Hahella chejuensis (strain KCTC 2396).